Consider the following 181-residue polypeptide: MRVVLLGPPGAGKGTQAQKLAEKLGIPQISTGELFRKNIQDGTKLGVEAKRYLDAGDLVPSDLTNQLVDDRLDQPDTAAGFILDGYPRSVEQAKALHEMLRRRDTDIDAVLEFRVSQDELLQRLKGRGRADDTDEVILNRMKVYRDETAPLLEFYDTEVKTVDAIGTLDEVFARALQALGK.

ATP is bound at residue 10–15 (GAGKGT). Residues 30–59 (STGELFRKNIQDGTKLGVEAKRYLDAGDLV) form an NMP region. AMP contacts are provided by residues threonine 31, arginine 36, 57-59 (DLV), 85-88 (GYPR), and glutamine 92. Residues 126-132 (GRGRADD) form an LID region. Arginine 127 contributes to the ATP binding site. AMP contacts are provided by arginine 129 and arginine 140. Position 166 (glycine 166) interacts with ATP.

Belongs to the adenylate kinase family. Monomer.

Its subcellular location is the cytoplasm. It catalyses the reaction AMP + ATP = 2 ADP. It participates in purine metabolism; AMP biosynthesis via salvage pathway; AMP from ADP: step 1/1. Catalyzes the reversible transfer of the terminal phosphate group between ATP and AMP. Plays an important role in cellular energy homeostasis and in adenine nucleotide metabolism. This Mycobacterium ulcerans (strain Agy99) protein is Adenylate kinase.